Reading from the N-terminus, the 364-residue chain is tRNA 2-selenouridine synthase (364 aa).

The Rhodanese domain occupies 14 to 137 (LLADTPLIDV…LRQTAIQATW (124 aa)). Cys-97 (S-selanylcysteine intermediate) is an active-site residue.

The protein belongs to the SelU family. Monomer.

It catalyses the reaction 5-methylaminomethyl-2-thiouridine(34) in tRNA + selenophosphate + (2E)-geranyl diphosphate + H2O + H(+) = 5-methylaminomethyl-2-selenouridine(34) in tRNA + (2E)-thiogeraniol + phosphate + diphosphate. The enzyme catalyses 5-methylaminomethyl-2-thiouridine(34) in tRNA + (2E)-geranyl diphosphate = 5-methylaminomethyl-S-(2E)-geranyl-thiouridine(34) in tRNA + diphosphate. It carries out the reaction 5-methylaminomethyl-S-(2E)-geranyl-thiouridine(34) in tRNA + selenophosphate + H(+) = 5-methylaminomethyl-2-(Se-phospho)selenouridine(34) in tRNA + (2E)-thiogeraniol. The catalysed reaction is 5-methylaminomethyl-2-(Se-phospho)selenouridine(34) in tRNA + H2O = 5-methylaminomethyl-2-selenouridine(34) in tRNA + phosphate. Involved in the post-transcriptional modification of the uridine at the wobble position (U34) of tRNA(Lys), tRNA(Glu) and tRNA(Gln). Catalyzes the conversion of 2-thiouridine (S2U-RNA) to 2-selenouridine (Se2U-RNA). Acts in a two-step process involving geranylation of 2-thiouridine (S2U) to S-geranyl-2-thiouridine (geS2U) and subsequent selenation of the latter derivative to 2-selenouridine (Se2U) in the tRNA chain. In Salmonella dublin (strain CT_02021853), this protein is tRNA 2-selenouridine synthase.